The sequence spans 223 residues: Probable GTP-binding protein EngB (223 aa).

One can recognise an EngB-type G domain in the interval 49-223; it reads MGVEIAFAGR…LRAALAGLTD (175 aa). GTP-binding positions include 57-64, 84-88, 102-105, 169-172, and 203-205; these read GRSNVGKS, GRTKQ, DMPG, TKAD, and TSS. 2 residues coordinate Mg(2+): S64 and T86.

This sequence belongs to the TRAFAC class TrmE-Era-EngA-EngB-Septin-like GTPase superfamily. EngB GTPase family. The cofactor is Mg(2+).

Necessary for normal cell division and for the maintenance of normal septation. The sequence is that of Probable GTP-binding protein EngB from Granulibacter bethesdensis (strain ATCC BAA-1260 / CGDNIH1).